The primary structure comprises 1624 residues: MPRPGTSGRRPLLLVLLLPLFAAATSAASPSPSPSQVVEVPGVPSRPASVAVCRCCPGQTSRRSRCIRAFCRVRSCQPKKCAGPQRCLNPVPAVPSPSPSVRKRQVSLNWQPLTLQEARALLKRRRPRGPGGRGLLRRRPPQRAPAGKAPVLCPLICHNGGVCVKPDRCLCPPDFAGKFCQLHSSGARPPAPAVPGLTRSVYTMPLANHRDDEHGVASMVSVHVEHPQEASVVVHQVERVSGPWEEADAEAVARAEAAARAEAAAPYTVLAQSAPREDGYSDASGFGYCFRELRGGECASPLPGLRTQEVCCRGAGLAWGVHDCQLCSERLGNSERVSAPDGPCPTGFERVNGSCEDVDECATGGRCQHGECANTRGGYTCVCPDGFLLDSSRSSCISQHVISEAKGPCFRVLRDGGCSLPILRNITKQICCCSRVGKAWGRGCQLCPPFGSEGFREICPAGPGYHYSASDLRYNTRPLGQEPPRVSLSQPRTLPATSRPSAGFLPTHRLEPRPEPRPDPRPGPELPLPSIPAWTGPEIPESGPSSGMCQRNPQVCGPGRCISRPSGYTCACDSGFRLSPQGTRCIDVDECRRVPPPCAPGRCENSPGSFRCVCGPGFRAGPRAAECLDVDECHRVPPPCDLGRCENTPGSFLCVCPAGYQAAPHGASCQDVDECTQSPGLCGRGACKNLPGSFRCVCPAGFRGSACEEDVDECAQEPPPCGPGRCDNTAGSFHCACPAGFRSRGPGAPCQDVDECARSPPPCTYGRCENTEGSFQCVCPMGFQPNTAGSECEDVDECENHLACPGQECVNSPGSFQCRTCPSGHHLHRGRCTDVDECSSGAPPCGPHGHCTNTEGSFRCSCAPGYRAPSGRPGPCADVNECLEGDFCFPHGECLNTDGSFACTCAPGYRPGPRGASCLDVDECSEEDLCQSGICTNTDGSFECICPPGHRAGPDLASCLDVDECRERGPALCGSQRCENSPGSYRCVRDCDPGYHAGPEGTCDDVDECQEYGPEICGAQRCENTPGSYRCTPACDPGYQPTPGGGCQDVDECRNRSFCGAHAVCQNLPGSFQCLCDQGYEGARDGRHCVDVNECETLQGVCGAALCENVEGSFLCVCPNSPEEFDPMTGRCVPPRTSAGTFPGSQPQAPASPVLPARPPPPPLPRRPSTPRQGPVGSGRRECYFDTAAPDACDNILARNVTWQECCCTVGEGWGSGCRIQQCPGTETAEYQSLCPHGRGYLAPSGDLSLRRDVDECQLFRDQVCKSGVCVNTAPGYSCYCSNGYYYHTQRLECIDNDECADEEPACEGGRCVNTVGSYHCTCEPPLVLDGSQRRCVSNESQSLDDNLGVCWQEVGADLVCSHPRLDRQATYTECCCLYGEAWGMDCALCPAQDSDDFEALCNVLRPPAYSPPRPGGFGLPYEYGPDLGPPYQGLPYGPELYPPPALPYDPYPPPPGPFARREAPYGAPRFDMPDFEDDGGPYGESEAPAPPGPGTRWPYRSRDTRRSFPEPEEPPEGGSYAGSLAEPYEELEAEECGILDGCTNGRCVRVPEGFTCRCFDGYRLDMTRMACVDINECDEAEAASPLCVNARCLNTDGSFRCICRPGFAPTHQPHHCAPARPRA.

Positions 1-27 are cleaved as a signal peptide; the sequence is MPRPGTSGRRPLLLVLLLPLFAAATSA. Residues 125–146 are disordered; the sequence is RRPRGPGGRGLLRRRPPQRAPA. Residues 149 to 181 enclose the EGF-like 1 domain; that stretch reads APVLCPLICHNGGVCVKPDRCLCPPDFAGKFCQ. Cystine bridges form between cysteine 153/cysteine 163, cysteine 157/cysteine 169, cysteine 171/cysteine 180, cysteine 289/cysteine 311, cysteine 298/cysteine 324, and cysteine 312/cysteine 327. The region spanning 287-339 is the TB 1 domain; it reads GYCFRELRGGECASPLPGLRTQEVCCRGAGLAWGVHDCQLCSERLGNSERVSA. N-linked (GlcNAc...) asparagine glycosylation occurs at asparagine 352. One can recognise an EGF-like 2; calcium-binding domain in the interval 357 to 397; the sequence is DVDECATGGRCQHGECANTRGGYTCVCPDGFLLDSSRSSCI. 7 cysteine pairs are disulfide-bonded: cysteine 361/cysteine 372, cysteine 367/cysteine 381, cysteine 383/cysteine 396, cysteine 409/cysteine 431, cysteine 418/cysteine 444, cysteine 432/cysteine 447, and cysteine 433/cysteine 459. One can recognise a TB 2 domain in the interval 407–459; that stretch reads GPCFRVLRDGGCSLPILRNITKQICCCSRVGKAWGRGCQLCPPFGSEGFREIC. Asparagine 425 is a glycosylation site (N-linked (GlcNAc...) asparagine). A disordered region spans residues 474–546; sequence YNTRPLGQEP…PEIPESGPSS (73 aa). Residues 487 to 500 show a composition bias toward polar residues; it reads SLSQPRTLPATSRP. Basic and acidic residues predominate over residues 508-522; it reads HRLEPRPEPRPDPRP. The region spanning 545–586 is the EGF-like 3 domain; the sequence is SSGMCQRNPQVCGPGRCISRPSGYTCACDSGFRLSPQGTRCI. 30 cysteine pairs are disulfide-bonded: cysteine 549/cysteine 561, cysteine 556/cysteine 570, cysteine 572/cysteine 585, cysteine 591/cysteine 603, cysteine 598/cysteine 612, cysteine 614/cysteine 627, cysteine 633/cysteine 645, cysteine 640/cysteine 654, cysteine 656/cysteine 669, cysteine 675/cysteine 687, cysteine 682/cysteine 696, cysteine 698/cysteine 707, cysteine 714/cysteine 726, cysteine 721/cysteine 735, cysteine 737/cysteine 750, cysteine 756/cysteine 768, cysteine 763/cysteine 777, cysteine 779/cysteine 792, cysteine 838/cysteine 851, cysteine 845/cysteine 860, cysteine 862/cysteine 876, cysteine 882/cysteine 894, cysteine 888/cysteine 903, cysteine 905/cysteine 918, cysteine 924/cysteine 935, cysteine 930/cysteine 944, cysteine 946/cysteine 959, cysteine 1053/cysteine 1065, cysteine 1059/cysteine 1074, and cysteine 1076/cysteine 1089. An EGF-like 4; calcium-binding domain is found at 587 to 628; sequence DVDECRRVPPPCAPGRCENSPGSFRCVCGPGFRAGPRAAECL. Residues 629 to 670 enclose the EGF-like 5; calcium-binding domain; that stretch reads DVDECHRVPPPCDLGRCENTPGSFLCVCPAGYQAAPHGASCQ. In terms of domain architecture, EGF-like 6; calcium-binding spans 671–708; sequence DVDECTQSPGLCGRGACKNLPGSFRCVCPAGFRGSACE. Residues 710–751 form the EGF-like 7; calcium-binding domain; it reads DVDECAQEPPPCGPGRCDNTAGSFHCACPAGFRSRGPGAPCQ. In terms of domain architecture, EGF-like 8; calcium-binding spans 752–793; that stretch reads DVDECARSPPPCTYGRCENTEGSFQCVCPMGFQPNTAGSECE. Residues 834-877 form the EGF-like 9; calcium-binding domain; that stretch reads DVDECSSGAPPCGPHGHCTNTEGSFRCSCAPGYRAPSGRPGPCA. The EGF-like 10; calcium-binding domain maps to 878–919; the sequence is DVNECLEGDFCFPHGECLNTDGSFACTCAPGYRPGPRGASCL. The 41-residue stretch at 920 to 960 folds into the EGF-like 11; calcium-binding domain; it reads DVDECSEEDLCQSGICTNTDGSFECICPPGHRAGPDLASCL. In terms of domain architecture, EGF-like 12; calcium-binding spans 1049–1090; that stretch reads DVDECRNRSFCGAHAVCQNLPGSFQCLCDQGYEGARDGRHCV. Residue asparagine 1055 is glycosylated (N-linked (GlcNAc...) asparagine). Positions 1130–1179 are disordered; sequence GRCVPPRTSAGTFPGSQPQAPASPVLPARPPPPPLPRRPSTPRQGPVGSG. Residues 1138–1149 show a composition bias toward polar residues; the sequence is SAGTFPGSQPQA. A compositionally biased stretch (pro residues) spans 1156–1168; it reads PARPPPPPLPRRP. The 55-residue stretch at 1181–1235 folds into the TB 3 domain; it reads RECYFDTAAPDACDNILARNVTWQECCCTVGEGWGSGCRIQQCPGTETAEYQSLC. Intrachain disulfides connect cysteine 1183-cysteine 1206, cysteine 1193-cysteine 1218, cysteine 1207-cysteine 1223, cysteine 1208-cysteine 1235, cysteine 1257-cysteine 1270, cysteine 1265-cysteine 1279, cysteine 1281-cysteine 1294, cysteine 1300-cysteine 1312, cysteine 1307-cysteine 1321, and cysteine 1323-cysteine 1336. An N-linked (GlcNAc...) asparagine glycan is attached at asparagine 1200. The region spanning 1253–1295 is the EGF-like 13; calcium-binding domain; sequence DVDECQLFRDQVCKSGVCVNTAPGYSCYCSNGYYYHTQRLECI. One can recognise an EGF-like 14; calcium-binding domain in the interval 1296–1337; the sequence is DNDECADEEPACEGGRCVNTVGSYHCTCEPPLVLDGSQRRCV. Asparagine 1339 carries an N-linked (GlcNAc...) asparagine glycan. Residues 1349 to 1402 form the TB 4 domain; the sequence is GVCWQEVGADLVCSHPRLDRQATYTECCCLYGEAWGMDCALCPAQDSDDFEALC. Disulfide bonds link cysteine 1351–cysteine 1375, cysteine 1361–cysteine 1387, cysteine 1376–cysteine 1390, and cysteine 1377–cysteine 1402. The span at 1446 to 1458 shows a compositional bias: pro residues; that stretch reads ALPYDPYPPPPGP. Residues 1446-1524 are disordered; it reads ALPYDPYPPP…PPEGGSYAGS (79 aa). Basic and acidic residues predominate over residues 1501–1510; the sequence is RSRDTRRSFP. 2 EGF-like domains span residues 1533-1573 and 1574-1618; these read EAEE…MACV and DINE…HHCA. 6 disulfides stabilise this stretch: cysteine 1537-cysteine 1548, cysteine 1543-cysteine 1557, cysteine 1559-cysteine 1572, cysteine 1578-cysteine 1593, cysteine 1588-cysteine 1602, and cysteine 1604-cysteine 1617.

The protein belongs to the LTBP family. In terms of assembly, forms part of the large latent transforming growth factor beta precursor complex; removal is essential for activation of complex. Interacts with LTBP1 and TGFB1. Interacts with EFEMP2; this interaction promotes fibrillar deposition of EFEMP2. In terms of processing, contains hydroxylated asparagine residues. As to expression, highly expressed in heart, skeletal muscle, pancreas, uterus, and small intestine. Weakly expressed in placenta and lung.

It is found in the secreted. It localises to the extracellular space. The protein localises to the extracellular matrix. In terms of biological role, key regulator of transforming growth factor beta (TGFB1, TGFB2 and TGFB3) that controls TGF-beta activation by maintaining it in a latent state during storage in extracellular space. Associates specifically via disulfide bonds with the Latency-associated peptide (LAP), which is the regulatory chain of TGF-beta, and regulates integrin-dependent activation of TGF-beta. This chain is Latent-transforming growth factor beta-binding protein 4 (LTBP4), found in Homo sapiens (Human).